Consider the following 282-residue polypeptide: tRNA pseudouridine synthase B (282 aa).

The active-site Nucleophile is the Asp-39.

The protein belongs to the pseudouridine synthase TruB family. Type 1 subfamily.

The enzyme catalyses uridine(55) in tRNA = pseudouridine(55) in tRNA. In terms of biological role, responsible for synthesis of pseudouridine from uracil-55 in the psi GC loop of transfer RNAs. The chain is tRNA pseudouridine synthase B from Borreliella afzelii (strain PKo) (Borrelia afzelii).